The sequence spans 888 residues: CRISPR-associated endonuclease/helicase Cas3 (888 aa).

The HD Cas3-type domain maps to 20–231; the sequence is KGNDIHLLIY…AGFCSLADWL (212 aa). The Mg(2+) site is built by Asp75 and His160. A Helicase ATP-binding domain is found at 301–504; the sequence is DALPVAPGLT…LDTYGLHTDP (204 aa). Residue 314–321 coordinates ATP; it reads APTGSGKT. The DEAH box signature appears at 452-455; the sequence is DEVH. The region spanning 556-735 is the Helicase C-terminal domain; sequence MLERMIAAAN…AYRQWLDSIY (180 aa).

The protein in the N-terminal section; belongs to the CRISPR-associated nuclease Cas3-HD family. It in the central section; belongs to the CRISPR-associated helicase Cas3 family. As to quaternary structure, interacts with the CasA subunit of Cascade once Cascade has recognized target DNA. Requires Mg(2+) as cofactor.

Its function is as follows. CRISPR (clustered regularly interspaced short palindromic repeat), is an adaptive immune system that provides protection against mobile genetic elements (viruses, transposable elements and conjugative plasmids). CRISPR clusters contain sequences complementary to antecedent mobile elements and target invading nucleic acids. CRISPR clusters are transcribed and processed into CRISPR RNA (crRNA). Cas3 plus Cascade participate in CRISPR interference, the third stage of CRISPR immunity. Acts as an endonuclease, a 3'-5'exonuclease, and an ATP-dependent dsDNA helicase. Anneals and unwinds R-loops (in which crRNA binds the target DNA, displacing the noncomplementary strand). Unwinding requires ATP, annealing does not. Required along with the Cascade complex for resistance to bacteriophage lambda infection as well as the ability to cure CRISPR-encoding high-copy number plasmid. A Cas3-CasA fusion protein purified with the Cascade complex nicks target plasmid in the presence but not absence of Mg(2+), and degrades plasmid fully in the presence of Mg(2+) and ATP, suggesting the helicase activity is required for complete degradation. The sequence is that of CRISPR-associated endonuclease/helicase Cas3 (ygcB) from Escherichia coli (strain K12).